A 478-amino-acid polypeptide reads, in one-letter code: 3-ketoacyl-CoA synthase 3 (478 aa).

A signal peptide spans 1–25; the sequence is MDLLVMLLSLLVSYLIFKIWKRIDS. One can recognise an FAE domain in the interval 26–313; the sequence is KRDQNCYILD…FMLCLLLKKL (288 aa). Active-site residues include Cys168, His247, His345, His349, His378, and Asn382.

The protein belongs to the thiolase-like superfamily. Chalcone/stilbene synthases family. Expressed in siliques, leaves, stems and seedlings.

The protein resides in the endoplasmic reticulum. The enzyme catalyses a very-long-chain acyl-CoA + malonyl-CoA + H(+) = a very-long-chain 3-oxoacyl-CoA + CO2 + CoA. Its pathway is lipid metabolism; fatty acid biosynthesis. The sequence is that of 3-ketoacyl-CoA synthase 3 from Arabidopsis thaliana (Mouse-ear cress).